The primary structure comprises 282 residues: Halorhodopsin (282 aa).

Residues 1 to 29 lie on the Extracellular side of the membrane; that stretch reads MMETAADALASGTVPLEMTQTQIFEAIQG. The helical transmembrane segment at 30–55 threads the bilayer; it reads DTLLASSLWINIALAGLSILLFVYMG. Over 56 to 61 the chain is Cytoplasmic; it reads RNLEDP. A helical transmembrane segment spans residues 62 to 85; the sequence is RAQLIFVATLMVPLVSISSYTGLV. Residues 86–109 lie on the Extracellular side of the membrane; it reads SGLTVSFLEMPAGHALAGQEVLTP. The helical transmembrane segment at 110–131 threads the bilayer; that stretch reads WGRYLTWALSTPMILVALGLLA. Residues 132-134 lie on the Cytoplasmic side of the membrane; the sequence is GSN. A helical transmembrane segment spans residues 135 to 158; sequence ATKLFTAVTADIGMCVTGLAAALT. At 159-161 the chain is on the extracellular side; it reads TSS. A helical transmembrane segment spans residues 162–184; sequence YLLRWVWYVISCAFFVVVLYVLL. At 185 to 196 the chain is on the cytoplasmic side; the sequence is AEWAEDAEVAGT. Residues 197 to 220 form a helical membrane-spanning segment; the sequence is AEIFNTLKLLTVVLWLGYPIFWAL. Residues 221 to 229 are Extracellular-facing; sequence GAEGLAVLD. Residues 230 to 258 traverse the membrane as a helical segment; sequence VAVTSWAYSGMDIVAKYLFAFLLLRWVVD. Lysine 245 carries the N6-(retinylidene)lysine modification. The Cytoplasmic segment spans residues 259–282; sequence NERTVAGMAAGLGAPLARCAPADD.

The protein belongs to the archaeal/bacterial/fungal opsin family.

It localises to the cell membrane. Functionally, light-driven chloride pump. The protein is Halorhodopsin (hop) of Halorubrum sodomense.